We begin with the raw amino-acid sequence, 363 residues long: Probable endopolygalacturonase A (363 aa).

Positions 1–20 are cleaved as a signal peptide; the sequence is MQLLQSSVIAATVGAALVAA. The propeptide occupies 21–28; sequence APVELEAR. Cysteines 31 and 46 form a disulfide. 6 PbH1 repeats span residues 158–187, 188–209, 210–230, 239–260, 268–290, and 302–347; these read SDNL…DIGS, STYI…AINS, GSHI…SIGS, VEDV…RIKT, VSNV…VVEQ, and TNGI…SITG. N162 carries an N-linked (GlcNAc...) asparagine glycan. The active-site Proton donor is D202. A disulfide bridge connects residues C204 and C220. H224 is a catalytic residue. 2 cysteine pairs are disulfide-bonded: C330/C335 and C354/C363.

Belongs to the glycosyl hydrolase 28 family.

The protein resides in the secreted. The enzyme catalyses (1,4-alpha-D-galacturonosyl)n+m + H2O = (1,4-alpha-D-galacturonosyl)n + (1,4-alpha-D-galacturonosyl)m.. Involved in maceration and soft-rotting of plant tissue. Hydrolyzes the 1,4-alpha glycosidic bonds of de-esterified pectate in the smooth region of the plant cell wall. The chain is Probable endopolygalacturonase A (pgaA) from Aspergillus parasiticus.